Reading from the N-terminus, the 672-residue chain is MCGISAFLCHPGKASSNEQANAQTRHVVDELEHSLDLVGHRGPDARGHIDILTIGLGHVRLSIIDLSLSGNQPFHDQDNSIHAVVNGELYDHEYYRDQLASEFQFVGTSDCEIVIALYKHYGLSFISHLRGEFAFVLWDANRQLLIAARDRYGIKSLYYTVVQGKLLVATEIKSFLAFGLQPEWCVRTLRDQSWRIESRTFFKGVHRVLPGHYLISRPNEREEQKPYWDLEYPDKLSHDARSEEEIVQGVRKRLLEAVKIRLKADVPVAIYLSGGIDSSSVAGMVADLMRQGTKLGNESNSVPSNMKCFTVQFDEDSGADESAIARRTANWLGVDIHLVKMDEEALASRFEDAVWHSEIPLPDLNGMGRLALAEAVHAQGIKVVITGEGSDEHFAGYDAFRADLLSEPDHSWPALQLPETDRQKALAMAAKQVKYGIFGEYSETVPDATKRMLNHSHVTSTIARVGSLPFSNWTTSYGNDLPETSLIEGFDGRVRDNITKRWHPLHTAQYLFTKSFMPHFILRYNGDNIDMVNQVESRCPFLDHHLTEYVNNVPPSLKLKYLPEEKSFREKYILREAVKPYVTDEIYNISKKAYMGPRKFWPGGPLHRKIKQLVTKENVESLGFVDWNATQEAVEKAFTKQDPMGLRRTITVAQFIVLGKRFGVKPAGALPN.

The Nucleophile role is filled by cysteine 2. Residues 2–219 (CGISAFLCHP…PGHYLISRPN (218 aa)) form the Glutamine amidotransferase type-2 domain. The Asparagine synthetase domain maps to 250 to 639 (VRKRLLEAVK…TQEAVEKAFT (390 aa)).

Belongs to the asparagine synthetase family.

Its pathway is pigment biosynthesis. Amidase; part of the gene cluster that mediates the biosynthesis of the yellow pigment chrysogine. the NRPS chyA mediates the condensation of anthranilic acid and alanine into the intermediate 2-(2-aminopropanamido)benzoic acid. The remainder of the pathway is highly branched yielding at least 13 chrysogine-related compounds. The malonyl transferase chyE converts 2-(2-aminopropanamido)benzoic acid and 2-(2-aminopropanamido)benzamidine into 2-(2-(2-carboxyacetamido)propanamido)benzoic acid and 3-((1-((2-carbamoylphenyl)amino)-1-oxopropan-2-yl)amino)-3-oxopropanoic acid, respectively. ChyD is an amidase, being responsible for the amidation of the carboxylic acid moiety of 2-(2-aminopropanamido)benzoic acid, 2-(2-(2-carboxyacetamido)propanamido)benzoic acid and 2-(2-((4-amino-1-carboxy-4-oxobutyl)amino)propanamido)benzoic acid. ChyC is involved in the same reactions as ChyD, but plays a more minor role in the amidation reactions compared to chyD. The oxidoreductases chyH and chyM are involved in oxidation reactions that form N-pyruvoylanthranilamide from 2-(2-aminopropanamido)benzamidine and (1-((2-carbamoylphenyl)amino)-1-oxopropan-2-yl)glutamine, respectively. N-pyruvoylanthranilamide is further converted via two further branches in the pathway, yielding chrysogine and additional chrysogine-related coumpounds. Chrysogine is likely formed by a spontaneous ring closure from N-pyruvoylanthranilamide. The polypeptide is Amidase chyE (Penicillium rubens (strain ATCC 28089 / DSM 1075 / NRRL 1951 / Wisconsin 54-1255) (Penicillium chrysogenum)).